The primary structure comprises 281 residues: MRVIETISDLKAIIRTQKNLGRVIGLVPTMGYLHEGHLSLVNMSRQNNDYTVMSIFVNPTQFGPNEDFDRYPRDLERDLKLAEAAGVDVVFAPSVKEMYPDGYKTYVNVEGITEVLCGKSRPGHFRGVTTIVTKLFNIVEPHRAYFGQKDAQQVAVIKKMVKDLNMNVEIITCPIVREEDGLAMSSRNVYLSPEERKSAVILSKSLMEAEELIKKGETDAKKIRKYIIDRIQTEKNAVIDYVEVVNADTLENVDEIKGRVLVALAVKFGSTRLIDNVIVEV.

Residue 30–37 (MGYLHEGH) coordinates ATP. His-37 serves as the catalytic Proton donor. Residue Gln-61 coordinates (R)-pantoate. Gln-61 serves as a coordination point for beta-alanine. Residue 147-150 (GQKD) coordinates ATP. Gln-153 is a (R)-pantoate binding site. ATP is bound by residues Val-176 and 184–187 (MSSR).

Belongs to the pantothenate synthetase family. Homodimer.

The protein localises to the cytoplasm. The enzyme catalyses (R)-pantoate + beta-alanine + ATP = (R)-pantothenate + AMP + diphosphate + H(+). It functions in the pathway cofactor biosynthesis; (R)-pantothenate biosynthesis; (R)-pantothenate from (R)-pantoate and beta-alanine: step 1/1. In terms of biological role, catalyzes the condensation of pantoate with beta-alanine in an ATP-dependent reaction via a pantoyl-adenylate intermediate. This Acetivibrio thermocellus (strain ATCC 27405 / DSM 1237 / JCM 9322 / NBRC 103400 / NCIMB 10682 / NRRL B-4536 / VPI 7372) (Clostridium thermocellum) protein is Pantothenate synthetase.